The chain runs to 512 residues: Cytochrome P450 98A1 (512 aa).

A helical membrane pass occupies residues 3 to 23 (ASLLLSVALAVVLIPLSLALL). Residue C441 coordinates heme.

This sequence belongs to the cytochrome P450 family. Heme is required as a cofactor.

It localises to the membrane. This is Cytochrome P450 98A1 (CYP98A1) from Sorghum bicolor (Sorghum).